A 276-amino-acid chain; its full sequence is Diaminopimelate epimerase (276 aa).

Asparagine 13, glutamine 46, and asparagine 66 together coordinate substrate. Cysteine 75 serves as the catalytic Proton donor. Residues 76-77 (GN), asparagine 159, asparagine 192, and 210-211 (ER) each bind substrate. The active-site Proton acceptor is cysteine 219. 220-221 (GS) is a binding site for substrate.

Belongs to the diaminopimelate epimerase family. Homodimer.

It is found in the cytoplasm. It catalyses the reaction (2S,6S)-2,6-diaminopimelate = meso-2,6-diaminopimelate. It participates in amino-acid biosynthesis; L-lysine biosynthesis via DAP pathway; DL-2,6-diaminopimelate from LL-2,6-diaminopimelate: step 1/1. Catalyzes the stereoinversion of LL-2,6-diaminopimelate (L,L-DAP) to meso-diaminopimelate (meso-DAP), a precursor of L-lysine and an essential component of the bacterial peptidoglycan. The chain is Diaminopimelate epimerase from Vibrio parahaemolyticus serotype O3:K6 (strain RIMD 2210633).